Consider the following 245-residue polypeptide: DNA polymerase sliding clamp 1 (245 aa).

The protein belongs to the PCNA family. The subunits circularize to form a toroid; DNA passes through its center. Replication factor C (RFC) is required to load the toroid on the DNA. Forms a dimeric complex with PCNA3 and a trimeric complex with PCNA2 and PCNA3; does not form homotrimers.

In terms of biological role, sliding clamp subunit that acts as a moving platform for DNA processing. Responsible for tethering the catalytic subunit of DNA polymerase and other proteins to DNA during high-speed replication. The trimeric complex inhibits DNA ligase and both 3'-5' and 5'-3' activity of Hel308 (Hjm) helicase, but stimulates Hjc, the Holliday junction cleavage enzyme. The sequence is that of DNA polymerase sliding clamp 1 from Sulfurisphaera tokodaii (strain DSM 16993 / JCM 10545 / NBRC 100140 / 7) (Sulfolobus tokodaii).